Here is a 397-residue protein sequence, read N- to C-terminus: Tryptophan synthase beta chain (397 aa).

Lys87 is subject to N6-(pyridoxal phosphate)lysine.

This sequence belongs to the TrpB family. Tetramer of two alpha and two beta chains. Requires pyridoxal 5'-phosphate as cofactor.

The enzyme catalyses (1S,2R)-1-C-(indol-3-yl)glycerol 3-phosphate + L-serine = D-glyceraldehyde 3-phosphate + L-tryptophan + H2O. It functions in the pathway amino-acid biosynthesis; L-tryptophan biosynthesis; L-tryptophan from chorismate: step 5/5. Its function is as follows. The beta subunit is responsible for the synthesis of L-tryptophan from indole and L-serine. This chain is Tryptophan synthase beta chain, found in Citrobacter koseri (strain ATCC BAA-895 / CDC 4225-83 / SGSC4696).